A 557-amino-acid polypeptide reads, in one-letter code: Neurofilament light polypeptide (557 aa).

Position 2 is an N-acetylserine (Ser-2). The head stretch occupies residues 2 to 89 (SSYSYDPYYT…KIVRTQEKAQ (88 aa)). Residues 86–396 (EKAQLQDLND…KLLEGEETRL (311 aa)) form the IF rod domain. The tract at residues 90 to 121 (LQDLNDRFANFIERVHELEQRNKVLEAELLLL) is coil 1A. Residues 122–134 (RQKHNEPSRLRDL) are linker 1. The tract at residues 135–230 (YEQEVRELRL…KVHEEELAQL (96 aa)) is coil 1B. The interval 231-248 (QSQVQYAQISLEVEVAKP) is linker 12. The segment at 249–267 (DLSSALRDIRAQYEKLAAK) is coil 2A. Positions 268–276 (NMQSAEDWF) are linker 2. Positions 277 to 392 (KSRFTVLTQS…AAYRKLLEGE (116 aa)) are coil 2B. Positions 393–437 (ETRLSFSGVGAITSGYTQSAPVFGRSAYSLQSSSYMTSRAFPTYY) are tail, subdomain A. Residues 393–557 (ETRLSFSGVG…KKKKKKKKKK (165 aa)) are tail. The tract at residues 438–557 (SSHVQEEQLD…KKKKKKKKKK (120 aa)) is tail, subdomain B (acidic). The tract at residues 452-557 (IESSRAEEAK…KKKKKKKKKK (106 aa)) is disordered. Residues 453–464 (ESSRAEEAKAEA) show a composition bias toward basic and acidic residues. Residues 465 to 538 (PEEEEEEAGE…GEGEEEEEGK (74 aa)) are compositionally biased toward acidic residues. The segment covering 539–548 (GEEPAEEESK) has biased composition (basic and acidic residues).

It belongs to the intermediate filament family. Forms homodimers (in vitro).

Its subcellular location is the cell projection. The protein localises to the axon. The protein resides in the cytoplasm. It localises to the cytoskeleton. Its function is as follows. Neurofilaments usually contain three intermediate filament proteins: NEFL, NEFM, and NEFH which are involved in the maintenance of neuronal caliber. May additionally cooperate with other neuronal intermediate filament proteins to form neuronal filamentous networks. In Xenopus tropicalis (Western clawed frog), this protein is Neurofilament light polypeptide (nefl).